Reading from the N-terminus, the 457-residue chain is Choline kinase alpha (457 aa).

The disordered stretch occupies residues 1-86; sequence MKTKFCTGGE…PPADEQPEPR (86 aa). The span at 13 to 32 shows a compositional bias: low complexity; the sequence is PSPLGLLLSCGSGSAAPAPG. The span at 55–80 shows a compositional bias: pro residues; sequence LALPPPPPLPLPLPLPQPPPPQPPAD. ATP-binding positions include 117–123, arginine 146, and 207–213; these read RGGLSNM and QFIPSRR. 119–121 provides a ligand contact to phosphocholine; sequence GLS. N6-acetyllysine is present on lysine 247. Serine 279 carries the phosphoserine modification. The ATP site is built by glutamine 308 and aspartate 330.

Belongs to the choline/ethanolamine kinase family. Homodimer. Heterodimer with CHKB. In terms of assembly, monomer; acetylation by KAT5 promotes dissociation of the homodimer and monomerization. As to quaternary structure, (Microbial infection) Interacts with PI4KA/PI4KIIIalpha; CHKA bridges PI4KA/PI4KIIIalpha and hepatitis C virus (HCV) non-structural protein 5A (NS5A) and potentiates NS5A-stimulated PI4KA activity, which then facilitates the targeting of the ternary complex to the ER for viral replication. Phosphorylated at Ser-279 by AMPK in response to glucose deprivation, leading to localization to lipid droplets. In terms of processing, acetylated by KAT5 at Lys-247 following phosphorylation by AMPK, leading to monomerization and conversion into a tyrosine-protein kinase.

Its subcellular location is the cytoplasm. It is found in the cytosol. The protein resides in the lipid droplet. The enzyme catalyses choline + ATP = phosphocholine + ADP + H(+). It carries out the reaction ethanolamine + ATP = phosphoethanolamine + ADP + H(+). The catalysed reaction is L-tyrosyl-[protein] + ATP = O-phospho-L-tyrosyl-[protein] + ADP + H(+). Its pathway is phospholipid metabolism; phosphatidylcholine biosynthesis; phosphocholine from choline: step 1/1. It functions in the pathway phospholipid metabolism; phosphatidylethanolamine biosynthesis; phosphatidylethanolamine from ethanolamine: step 1/3. With respect to regulation, homodimerization or heterodimerization is required for the choline and ethanolamine kinase activities. Plays a key role in phospholipid biosynthesis by catalyzing the phosphorylation of free choline to phosphocholine, the first step in phosphatidylcholine biosynthesis. Also phosphorylates ethanolamine, thereby contributing to phosphatidylethanolamine biosynthesis. Has higher activity with choline. May contribute to tumor cell growth. Its function is as follows. This isoform plays a key role in lipolysis of lipid droplets following glucose deprivation. In response to glucose deprivation, phosphorylated by AMPK, promoting localization to lipid droplets. Phosphorylation is followed by acetylation by KAT5, leading to dissociation of the homodimer into a monomer. Monomeric CHKA isoform 1 is converted into a tyrosine-protein kinase, which phosphorylates lipid droplet structural proteins PLIN2 and PLIN3, leading to lipolysis of lipid droplets. The sequence is that of Choline kinase alpha (CHKA) from Homo sapiens (Human).